The sequence spans 217 residues: 3,4-dihydroxy-2-butanone 4-phosphate synthase (217 aa).

D-ribulose 5-phosphate is bound by residues 37–38 (RE), Asp-42, 150–154 (RRGHT), and Glu-174. A Mg(2+)-binding site is contributed by Glu-38. His-153 is a binding site for Mg(2+).

This sequence belongs to the DHBP synthase family. In terms of assembly, homodimer. Mg(2+) serves as cofactor. It depends on Mn(2+) as a cofactor.

It catalyses the reaction D-ribulose 5-phosphate = (2S)-2-hydroxy-3-oxobutyl phosphate + formate + H(+). It functions in the pathway cofactor biosynthesis; riboflavin biosynthesis; 2-hydroxy-3-oxobutyl phosphate from D-ribulose 5-phosphate: step 1/1. In terms of biological role, catalyzes the conversion of D-ribulose 5-phosphate to formate and 3,4-dihydroxy-2-butanone 4-phosphate. The protein is 3,4-dihydroxy-2-butanone 4-phosphate synthase of Yersinia pseudotuberculosis serotype O:1b (strain IP 31758).